The chain runs to 263 residues: uncharacterized protein (263 aa).

31–38 (GPTGSGKT) is a binding site for ATP.

The protein belongs to the CbbQ/NirQ/NorQ/GpvN family.

This is an uncharacterized protein from Staphylococcus aureus (strain USA300).